A 126-amino-acid polypeptide reads, in one-letter code: Small ribosomal subunit protein uS8 (126 aa).

This sequence belongs to the universal ribosomal protein uS8 family. Part of the 30S ribosomal subunit. Contacts proteins S5 and S12.

In terms of biological role, one of the primary rRNA binding proteins, it binds directly to 16S rRNA central domain where it helps coordinate assembly of the platform of the 30S subunit. The sequence is that of Small ribosomal subunit protein uS8 from Nitratidesulfovibrio vulgaris (strain DSM 19637 / Miyazaki F) (Desulfovibrio vulgaris).